The primary structure comprises 284 residues: 4-hydroxybenzoate octaprenyltransferase (284 aa).

A run of 9 helical transmembrane segments spans residues 19 to 39 (IPIL…SHGL), 42 to 62 (ISYL…GCII), 85 to 105 (GQLS…VAFI), 107 to 127 (VLFL…LAIL), 134 to 154 (FFAI…FMAF), 165 to 185 (AWIF…IYAL), 211 to 231 (ILLF…YCDF), 233 to 253 (SFFY…YFLY), and 261 to 281 (CINA…IAVI).

This sequence belongs to the UbiA prenyltransferase family. Mg(2+) is required as a cofactor.

Its subcellular location is the cell inner membrane. The enzyme catalyses all-trans-octaprenyl diphosphate + 4-hydroxybenzoate = 4-hydroxy-3-(all-trans-octaprenyl)benzoate + diphosphate. It participates in cofactor biosynthesis; ubiquinone biosynthesis. Catalyzes the prenylation of para-hydroxybenzoate (PHB) with an all-trans polyprenyl group. Mediates the second step in the final reaction sequence of ubiquinone-8 (UQ-8) biosynthesis, which is the condensation of the polyisoprenoid side chain with PHB, generating the first membrane-bound Q intermediate 3-octaprenyl-4-hydroxybenzoate. The chain is 4-hydroxybenzoate octaprenyltransferase from Francisella tularensis subsp. tularensis (strain FSC 198).